We begin with the raw amino-acid sequence, 91 residues long: RNA-binding protein Hfq (91 aa).

Residues 9–68 (DPFLNALRRERVPVSIYLVNGIKLQGQVESFDQFVILLKNTVSQMVYKHAISTVVPSRPF) enclose the Sm domain. The interval 66–91 (RPFNVGSHQGGSSNYNAQQDDSAGEQ) is disordered. Residues 71–91 (GSHQGGSSNYNAQQDDSAGEQ) are compositionally biased toward polar residues.

The protein belongs to the Hfq family. Homohexamer.

RNA chaperone that binds small regulatory RNA (sRNAs) and mRNAs to facilitate mRNA translational regulation in response to envelope stress, environmental stress and changes in metabolite concentrations. Also binds with high specificity to tRNAs. This chain is RNA-binding protein Hfq, found in Shewanella amazonensis (strain ATCC BAA-1098 / SB2B).